Consider the following 206-residue polypeptide: Transmembrane emp24 domain-containing protein bai (206 aa).

An N-terminal signal peptide occupies residues 1-20 (MLKVLYVIFTIFGYIWPIYS). Residues 21-172 (VMFHLTPNTQ…RDTNEKTNSR (152 aa)) lie on the Lumenal side of the membrane. In terms of domain architecture, GOLD spans 30–140 (QKCLKEDIQA…LKPLEVDLKR (111 aa)). A helical transmembrane segment spans residues 173-193 (VLFFSIFSMCCLLGLATWQVL). At 194–206 (YLRRYFKAKKLIE) the chain is on the cytoplasmic side.

This sequence belongs to the EMP24/GP25L family.

It localises to the membrane. Eca and bai are essential, though not redundant, for dorsoventral patterning of the embryo. Specifically required during early embryogenesis for the activity of maternal tkv, while the zygotic tkv is not affected. In Drosophila virilis (Fruit fly), this protein is Transmembrane emp24 domain-containing protein bai.